A 197-amino-acid polypeptide reads, in one-letter code: MKKRRSKKERQELLQQTIETNPFITDEDLAEKFQVSIQTVRLDRMELSIPELRERIKHVATKQHEEDVKSLPLEEVVGEIIDIELDRHAISIFEVKVEHVFKRNQIARGHHLFAQANSLAVAVIDEELALTAKSTIRYIRPVKLGERVVAKVRVEDVENDKGRTVVKVRSFVGEELVFTGTFEMYRSSNYSEEGNNL.

Belongs to the FapR family.

In terms of biological role, transcriptional factor involved in regulation of membrane lipid biosynthesis by repressing genes involved in fatty acid and phospholipid metabolism. The polypeptide is Transcription factor FapR (Bacillus mycoides (strain KBAB4) (Bacillus weihenstephanensis)).